The primary structure comprises 518 residues: WEB family protein At2g40480 (518 aa).

Coiled-coil stretches lie at residues 95-141 and 188-219; these read DIKR…LQQE and DNLV…AKLT. Residues 303-337 are disordered; sequence NGESQDDDSEFCFPEPPRSPVTPRGLRIDNDFSTD. Over residues 328–337 the composition is skewed to basic and acidic residues; sequence LRIDNDFSTD. Residues 344 to 375 adopt a coiled-coil conformation; the sequence is ILKKLEEATEGVKQSKQALEAALNRVEIANVK.

This sequence belongs to the WEB family.

The polypeptide is WEB family protein At2g40480 (Arabidopsis thaliana (Mouse-ear cress)).